The sequence spans 183 residues: UPF0397 protein stu0306/stu0307 (183 aa).

The next 5 helical transmembrane spans lie at 11–31, 44–64, 74–94, 111–131, and 149–169; these read ATGIGAALFIIICIFVNIPIF, VLFSVIFGSRSIIGFFMGFIG, GDISWAWVLASGITGLVIGLF, IWFNLAQALGLLIAYGVVTPI, and FVAGVANFITIAIGGTLLLAI.

The protein belongs to the UPF0397 family.

Its subcellular location is the cell membrane. This is UPF0397 protein stu0306/stu0307 from Streptococcus thermophilus (strain ATCC BAA-250 / LMG 18311).